Consider the following 544-residue polypeptide: Probable protein kinase UbiB (544 aa).

A helical membrane pass occupies residues 1–21 (MIFGELRRLYLIIGVMLSYGL). The region spanning 123-500 (DFQQEPLASA…HVRQSQSRFL (378 aa)) is the Protein kinase domain. Residues 129–137 (LASASIAQV) and lysine 151 each bind ATP. The Proton acceptor role is filled by aspartate 286. 2 helical membrane passes run 499 to 519 (FLFG…TQGA) and 520 to 540 (DEGS…IIGW).

Belongs to the ABC1 family. UbiB subfamily.

Its subcellular location is the cell inner membrane. It participates in cofactor biosynthesis; ubiquinone biosynthesis [regulation]. In terms of biological role, is probably a protein kinase regulator of UbiI activity which is involved in aerobic coenzyme Q (ubiquinone) biosynthesis. The protein is Probable protein kinase UbiB of Sodalis glossinidius (strain morsitans).